The following is a 193-amino-acid chain: Holliday junction branch migration complex subunit RuvA (193 aa).

The interval 1–63 (MIHHLKGQLI…EDSHTLYGFA (63 aa)) is domain I. Positions 64 to 142 (EKSEREIFRL…KVLGDDEVFV (79 aa)) are domain II. A flexible linker region spans residues 143 to 145 (SQS). A domain III region spans residues 145-193 (SNTNKEEALSALEILGYNRRQAGKVVEKILKEDPESTVESIIKMALKKL).

Belongs to the RuvA family. Homotetramer. Forms an RuvA(8)-RuvB(12)-Holliday junction (HJ) complex. HJ DNA is sandwiched between 2 RuvA tetramers; dsDNA enters through RuvA and exits via RuvB. An RuvB hexamer assembles on each DNA strand where it exits the tetramer. Each RuvB hexamer is contacted by two RuvA subunits (via domain III) on 2 adjacent RuvB subunits; this complex drives branch migration. In the full resolvosome a probable DNA-RuvA(4)-RuvB(12)-RuvC(2) complex forms which resolves the HJ.

The protein resides in the cytoplasm. Functionally, the RuvA-RuvB-RuvC complex processes Holliday junction (HJ) DNA during genetic recombination and DNA repair, while the RuvA-RuvB complex plays an important role in the rescue of blocked DNA replication forks via replication fork reversal (RFR). RuvA specifically binds to HJ cruciform DNA, conferring on it an open structure. The RuvB hexamer acts as an ATP-dependent pump, pulling dsDNA into and through the RuvAB complex. HJ branch migration allows RuvC to scan DNA until it finds its consensus sequence, where it cleaves and resolves the cruciform DNA. This Christiangramia forsetii (strain DSM 17595 / CGMCC 1.15422 / KT0803) (Gramella forsetii) protein is Holliday junction branch migration complex subunit RuvA.